A 1184-amino-acid polypeptide reads, in one-letter code: Probable phospholipid-transporting ATPase 12 (1184 aa).

At 1 to 75 the chain is on the cytoplasmic side; sequence MATVSGRRRK…TTKYTLATFL (75 aa). Residues 76 to 97 form a helical membrane-spanning segment; sequence PKSLFEQFRRVANFYFLVVGIL. Over 98–101 the chain is Extracellular; sequence SFTP. A helical membrane pass occupies residues 102–124; that stretch reads LAPYTAVSAIVPLTFVILATMFK. Over 125-306 the chain is Cytoplasmic; the sequence is EGVEDWRRKQ…SMIERKMDKI (182 aa). A helical membrane pass occupies residues 307-328; the sequence is IYLMFLMVFSLAFFGSVLFGIW. Residues 329 to 364 are Extracellular-facing; that stretch reads TRDDFQNGVMERWYLKPDDSSIFFDPKRAPMAAIYH. Residues 365–382 traverse the membrane as a helical segment; that stretch reads FLTALMLNSYFIPISLYV. Residues 383–921 are Cytoplasmic-facing; sequence SIEIVKVLQS…HGHWCYRRIS (539 aa). Asp-430 serves as the catalytic 4-aspartylphosphate intermediate. Mg(2+)-binding residues include Asp-866 and Asp-870. A helical transmembrane segment spans residues 922-941; it reads KMICYFFYKNITFGFTLFLY. The Extracellular portion of the chain corresponds to 942-955; the sequence is EAYTSFSATPAYND. Residues 956–975 form a helical membrane-spanning segment; sequence WYLSLYSVFFTSLPVICLGI. Residues 976-1005 are Cytoplasmic-facing; the sequence is FDQDVSAPFCLKFPVLYQEGVQNLLFSWRR. The chain crosses the membrane as a helical span at residues 1006–1028; the sequence is ILSWMFHGFCSAIIIFFLCKTSL. The Extracellular segment spans residues 1029–1041; sequence ESQAFNHEGKTAG. Residues 1042-1064 form a helical membrane-spanning segment; it reads RDILGGTMYTCVVWVVSLQMVLT. Over 1065–1070 the chain is Cytoplasmic; it reads ISYFTL. A helical membrane pass occupies residues 1071-1091; sequence IQHVVVWGSVVIWYLFLMVYG. The Extracellular portion of the chain corresponds to 1092–1108; the sequence is SLPIRMSTDAYMVFLEA. Residues 1109–1133 traverse the membrane as a helical segment; the sequence is LAPAPSYWITTLFVVLSTMMPYFIF. At 1134-1184 the chain is on the cytoplasmic side; it reads SAIQMRFFPMSHGTVQLLRYEDQCSNSGNFEMGRQGSVRPTLVMRSHQPES.

This sequence belongs to the cation transport ATPase (P-type) (TC 3.A.3) family. Type IV subfamily.

It is found in the membrane. It carries out the reaction ATP + H2O + phospholipidSide 1 = ADP + phosphate + phospholipidSide 2.. Involved in transport of phospholipids. The sequence is that of Probable phospholipid-transporting ATPase 12 from Arabidopsis thaliana (Mouse-ear cress).